The following is a 232-amino-acid chain: Flagellar L-ring protein (232 aa).

Positions 1-21 are cleaved as a signal peptide; the sequence is MQKNAAHTYAISSLLVLSLTG. The N-palmitoyl cysteine moiety is linked to residue cysteine 22. Cysteine 22 carries S-diacylglycerol cysteine lipidation.

The protein belongs to the FlgH family. As to quaternary structure, the basal body constitutes a major portion of the flagellar organelle and consists of four rings (L,P,S, and M) mounted on a central rod.

The protein localises to the cell outer membrane. Its subcellular location is the bacterial flagellum basal body. Functionally, assembles around the rod to form the L-ring and probably protects the motor/basal body from shearing forces during rotation. In Shigella boydii serotype 4 (strain Sb227), this protein is Flagellar L-ring protein.